The chain runs to 287 residues: ATP synthase gamma chain (287 aa).

The protein belongs to the ATPase gamma chain family. F-type ATPases have 2 components, CF(1) - the catalytic core - and CF(0) - the membrane proton channel. CF(1) has five subunits: alpha(3), beta(3), gamma(1), delta(1), epsilon(1). CF(0) has three main subunits: a, b and c.

Its subcellular location is the cell inner membrane. Functionally, produces ATP from ADP in the presence of a proton gradient across the membrane. The gamma chain is believed to be important in regulating ATPase activity and the flow of protons through the CF(0) complex. The chain is ATP synthase gamma chain from Baumannia cicadellinicola subsp. Homalodisca coagulata.